A 275-amino-acid chain; its full sequence is Orotidine 5'-phosphate decarboxylase (275 aa).

Lys101 functions as the Proton donor in the catalytic mechanism.

It belongs to the OMP decarboxylase family. Type 2 subfamily.

The catalysed reaction is orotidine 5'-phosphate + H(+) = UMP + CO2. It participates in pyrimidine metabolism; UMP biosynthesis via de novo pathway; UMP from orotate: step 2/2. In Leptospira interrogans serogroup Icterohaemorrhagiae serovar Lai (strain 56601), this protein is Orotidine 5'-phosphate decarboxylase.